A 307-amino-acid chain; its full sequence is Acetyl-coenzyme A carboxylase carboxyl transferase subunit beta (307 aa).

Residues 1–21 form a disordered region; that stretch reads MAMADQRNDKPGRPAAQRERR. Residues 43 to 307 form the CoA carboxyltransferase N-terminal domain; the sequence is LWVKCPETGE…MGRERLSPAA (265 aa).

The protein belongs to the AccD/PCCB family. Acetyl-CoA carboxylase is a heterohexamer composed of biotin carboxyl carrier protein (AccB), biotin carboxylase (AccC) and two subunits each of ACCase subunit alpha (AccA) and ACCase subunit beta (AccD).

Its subcellular location is the cytoplasm. The enzyme catalyses N(6)-carboxybiotinyl-L-lysyl-[protein] + acetyl-CoA = N(6)-biotinyl-L-lysyl-[protein] + malonyl-CoA. It participates in lipid metabolism; malonyl-CoA biosynthesis; malonyl-CoA from acetyl-CoA: step 1/1. Functionally, component of the acetyl coenzyme A carboxylase (ACC) complex. Biotin carboxylase (BC) catalyzes the carboxylation of biotin on its carrier protein (BCCP) and then the CO(2) group is transferred by the transcarboxylase to acetyl-CoA to form malonyl-CoA. This is Acetyl-coenzyme A carboxylase carboxyl transferase subunit beta from Phenylobacterium zucineum (strain HLK1).